The following is a 181-amino-acid chain: ATP synthase subunit delta (181 aa).

The protein belongs to the ATPase delta chain family. In terms of assembly, F-type ATPases have 2 components, F(1) - the catalytic core - and F(0) - the membrane proton channel. F(1) has five subunits: alpha(3), beta(3), gamma(1), delta(1), epsilon(1). F(0) has three main subunits: a(1), b(2) and c(10-14). The alpha and beta chains form an alternating ring which encloses part of the gamma chain. F(1) is attached to F(0) by a central stalk formed by the gamma and epsilon chains, while a peripheral stalk is formed by the delta and b chains.

It localises to the cell membrane. Its function is as follows. F(1)F(0) ATP synthase produces ATP from ADP in the presence of a proton or sodium gradient. F-type ATPases consist of two structural domains, F(1) containing the extramembraneous catalytic core and F(0) containing the membrane proton channel, linked together by a central stalk and a peripheral stalk. During catalysis, ATP synthesis in the catalytic domain of F(1) is coupled via a rotary mechanism of the central stalk subunits to proton translocation. This protein is part of the stalk that links CF(0) to CF(1). It either transmits conformational changes from CF(0) to CF(1) or is implicated in proton conduction. This chain is ATP synthase subunit delta, found in Mycoplasma capricolum subsp. capricolum (strain California kid / ATCC 27343 / NCTC 10154).